Here is a 152-residue protein sequence, read N- to C-terminus: Nucleoside diphosphate kinase B (152 aa).

Residues M1–K66 are interaction with AKAP13. ATP-binding residues include K12, F60, R88, T94, R105, and N115. The active-site Pros-phosphohistidine intermediate is the H118.

Belongs to the NDK family. In terms of assembly, hexamer of two different chains: An and B (A6, A5B, A4B2, A3B3, A2B4, AB5, B6). Interacts with CAPN8. Interacts with AKAP13. Interacts with ITGB1BP1 (via C-terminal domain region). Interacts with BCL2L10. Mg(2+) serves as cofactor.

Its subcellular location is the cytoplasm. The protein resides in the cell projection. The protein localises to the lamellipodium. It localises to the ruffle. It is found in the nucleus. The enzyme catalyses a 2'-deoxyribonucleoside 5'-diphosphate + ATP = a 2'-deoxyribonucleoside 5'-triphosphate + ADP. The catalysed reaction is a ribonucleoside 5'-diphosphate + ATP = a ribonucleoside 5'-triphosphate + ADP. It carries out the reaction ATP + protein L-histidine = ADP + protein N-phospho-L-histidine.. In terms of biological role, major role in the synthesis of nucleoside triphosphates other than ATP. The ATP gamma phosphate is transferred to the NDP beta phosphate via a ping-pong mechanism, using a phosphorylated active-site intermediate. Negatively regulates Rho activity by interacting with AKAP13/LBC. Acts as a transcriptional activator of the MYC gene; binds DNA non-specifically. Binds to both single-stranded guanine- and cytosine-rich strands within the nuclease hypersensitive element (NHE) III(1) region of the MYC gene promoter. Does not bind to duplex NHE III(1). Has G-quadruplex (G4) DNA-binding activity, which is independent of its nucleotide-binding and kinase activity. Binds both folded and unfolded G4 with similar low nanomolar affinities. Stabilizes folded G4s regardless of whether they are prefolded or not. Exhibits histidine protein kinase activity. This chain is Nucleoside diphosphate kinase B (NME2), found in Bos taurus (Bovine).